The primary structure comprises 732 residues: Elongation factor 2 (732 aa).

The tr-type G domain occupies 19–228; sequence ELVRNIGIVA…TKITFKDIVE (210 aa). GTP-binding positions include 28–35, 94–98, and 148–151; these read AHIDHGKT, DTPGH, and NKID. Position 598 is a diphthamide (histidine 598).

This sequence belongs to the TRAFAC class translation factor GTPase superfamily. Classic translation factor GTPase family. EF-G/EF-2 subfamily.

It is found in the cytoplasm. Its function is as follows. Catalyzes the GTP-dependent ribosomal translocation step during translation elongation. During this step, the ribosome changes from the pre-translocational (PRE) to the post-translocational (POST) state as the newly formed A-site-bound peptidyl-tRNA and P-site-bound deacylated tRNA move to the P and E sites, respectively. Catalyzes the coordinated movement of the two tRNA molecules, the mRNA and conformational changes in the ribosome. In Thermoplasma volcanium (strain ATCC 51530 / DSM 4299 / JCM 9571 / NBRC 15438 / GSS1), this protein is Elongation factor 2.